Consider the following 477-residue polypeptide: Aspartyl/glutamyl-tRNA(Asn/Gln) amidotransferase subunit B (477 aa).

It belongs to the GatB/GatE family. GatB subfamily. In terms of assembly, heterotrimer of A, B and C subunits.

The enzyme catalyses L-glutamyl-tRNA(Gln) + L-glutamine + ATP + H2O = L-glutaminyl-tRNA(Gln) + L-glutamate + ADP + phosphate + H(+). It catalyses the reaction L-aspartyl-tRNA(Asn) + L-glutamine + ATP + H2O = L-asparaginyl-tRNA(Asn) + L-glutamate + ADP + phosphate + 2 H(+). Allows the formation of correctly charged Asn-tRNA(Asn) or Gln-tRNA(Gln) through the transamidation of misacylated Asp-tRNA(Asn) or Glu-tRNA(Gln) in organisms which lack either or both of asparaginyl-tRNA or glutaminyl-tRNA synthetases. The reaction takes place in the presence of glutamine and ATP through an activated phospho-Asp-tRNA(Asn) or phospho-Glu-tRNA(Gln). The protein is Aspartyl/glutamyl-tRNA(Asn/Gln) amidotransferase subunit B of Lawsonia intracellularis (strain PHE/MN1-00).